We begin with the raw amino-acid sequence, 352 residues long: UDP-N-acetylglucosamine--N-acetylmuramyl-(pentapeptide) pyrophosphoryl-undecaprenol N-acetylglucosamine transferase (352 aa).

Ser-195 and Gln-287 together coordinate UDP-N-acetyl-alpha-D-glucosamine.

The protein belongs to the glycosyltransferase 28 family. MurG subfamily.

The protein resides in the cell membrane. It carries out the reaction Mur2Ac(oyl-L-Ala-gamma-D-Glu-L-Lys-D-Ala-D-Ala)-di-trans,octa-cis-undecaprenyl diphosphate + UDP-N-acetyl-alpha-D-glucosamine = beta-D-GlcNAc-(1-&gt;4)-Mur2Ac(oyl-L-Ala-gamma-D-Glu-L-Lys-D-Ala-D-Ala)-di-trans,octa-cis-undecaprenyl diphosphate + UDP + H(+). It functions in the pathway cell wall biogenesis; peptidoglycan biosynthesis. Cell wall formation. Catalyzes the transfer of a GlcNAc subunit on undecaprenyl-pyrophosphoryl-MurNAc-pentapeptide (lipid intermediate I) to form undecaprenyl-pyrophosphoryl-MurNAc-(pentapeptide)GlcNAc (lipid intermediate II). In Streptococcus pneumoniae (strain Hungary19A-6), this protein is UDP-N-acetylglucosamine--N-acetylmuramyl-(pentapeptide) pyrophosphoryl-undecaprenol N-acetylglucosamine transferase.